The sequence spans 304 residues: Carnitine monooxygenase reductase subunit (304 aa).

An FAD-binding FR-type domain is found at 1 to 93 (MEQLTPLIKR…SEPKNLFPLA (93 aa)). In terms of domain architecture, 2Fe-2S ferredoxin-type spans 219–304 (FTVVLAKSNQ…AKGKKLVLDL (86 aa)). The [2Fe-2S] cluster site is built by Cys-253, Cys-258, Cys-261, and Cys-291.

This sequence belongs to the PDR/VanB family. CntB subfamily. In terms of assembly, composed of an oxygenase subunit and a reductase subunit. The cofactor is FMN. It depends on [2Fe-2S] cluster as a cofactor.

The enzyme catalyses (R)-carnitine + NADH + O2 + H(+) = (3R)-3-hydroxy-4-oxobutanoate + trimethylamine + NAD(+) + H2O. It carries out the reaction (R)-carnitine + NADPH + O2 + H(+) = (3R)-3-hydroxy-4-oxobutanoate + trimethylamine + NADP(+) + H2O. It participates in amine and polyamine metabolism; carnitine metabolism. With respect to regulation, inhibited by EDTA. In terms of biological role, converts carnitine to trimethylamine and malic semialdehyde. Acts on both enantiomers. The polypeptide is Carnitine monooxygenase reductase subunit (Acinetobacter pittii (strain PHEA-2)).